The following is a 155-amino-acid chain: Regulatory protein RecX (155 aa).

It belongs to the RecX family.

Its subcellular location is the cytoplasm. Functionally, modulates RecA activity. This is Regulatory protein RecX from Pseudomonas syringae pv. tomato (strain ATCC BAA-871 / DC3000).